The chain runs to 314 residues: Vomeronasal type-1 receptor 95 (314 aa).

At 1–18 (MNKDNTLYCSAYRIAFFS) the chain is on the extracellular side. The chain crosses the membrane as a helical span at residues 19 to 39 (EIGIGISANSCLLLFHTFMFI). Residues 40-48 (RGHRPRLTD) lie on the Cytoplasmic side of the membrane. Residues 49 to 69 (LPIGLVALIHLVMLLLAAYIT) form a helical membrane-spanning segment. At 70-88 (EDFFMSSGGWDDITCKLFI) the chain is on the extracellular side. A disulfide bridge connects residues Cys84 and Cys171. A helical membrane pass occupies residues 89-113 (FLHRFFRSLSVCDTCMLSVFQAIIL). At 114 to 133 (CPQSSHLAKFKLNSPHHLSC) the chain is on the cytoplasmic side. Residues 134–154 (FFIFMSIFYTSISSHILIAAI) form a helical membrane-spanning segment. The Extracellular portion of the chain corresponds to 155–186 (ATQNLTSVNLIYITKSCSFLPMSSSMQRTFST). Asn158 carries an N-linked (GlcNAc...) asparagine glycan. A helical membrane pass occupies residues 187–207 (LLAFRNVFLIGLMGLSTCYMA). The Cytoplasmic portion of the chain corresponds to 208–235 (TLLCRHKTRSQQLQNSKLSPKATPEQRA). The helical transmembrane segment at 236–256 (IWTILMLMSFFLIISTFDSIM) threads the bilayer. Over 257–268 (TYSRTIFQGNQS) the chain is Extracellular. A glycan (N-linked (GlcNAc...) asparagine) is linked at Asn266. Residues 269-289 (LYCVQIPVAHGYAAFSPLLVL) form a helical membrane-spanning segment. At 290–314 (NNEKRLTSLMISMYDRIVRLESLCS) the chain is on the cytoplasmic side.

Belongs to the G-protein coupled receptor 1 family.

It localises to the cell membrane. In terms of biological role, putative pheromone receptor implicated in the regulation of social as well as reproductive behavior. The chain is Vomeronasal type-1 receptor 95 (Vom1r95) from Rattus norvegicus (Rat).